Reading from the N-terminus, the 153-residue chain is LOB domain-containing protein 26 (153 aa).

The region spanning Asn-4 to Leu-105 is the LOB domain. A disordered region spans residues Lys-126–Ser-153. Over residues Lys-140–Ser-153 the composition is skewed to basic and acidic residues.

Belongs to the LOB domain-containing protein family.

The protein is LOB domain-containing protein 26 (LBD26) of Arabidopsis thaliana (Mouse-ear cress).